We begin with the raw amino-acid sequence, 63 residues long: MNFNKVLVLLAVIFAVFAGQTEAGWLKKIGKKIERVGQHTRDATIQTIGVAQQAANVAATLKG.

An N-terminal signal peptide occupies residues 1 to 21 (MNFNKVLVLLAVIFAVFAGQT). Positions 22-23 (EA) are excised as a propeptide. Lys62 is modified (lysine amide).

The protein belongs to the cecropin family.

The protein localises to the secreted. Its function is as follows. Cecropins have lytic and antibacterial activity against several Gram-positive and Gram-negative bacteria. The polypeptide is Cecropin-2 (CEC2) (Ceratitis capitata (Mediterranean fruit fly)).